The primary structure comprises 76 residues: Large ribosomal subunit protein bL31 (76 aa).

This sequence belongs to the bacterial ribosomal protein bL31 family. Type A subfamily. In terms of assembly, part of the 50S ribosomal subunit.

Functionally, binds the 23S rRNA. The sequence is that of Large ribosomal subunit protein bL31 from Gluconacetobacter diazotrophicus (strain ATCC 49037 / DSM 5601 / CCUG 37298 / CIP 103539 / LMG 7603 / PAl5).